A 465-amino-acid chain; its full sequence is Sensor histidine kinase ZraS (465 aa).

Residues 1–14 (MRFMQRSKDSLAKW) are Cytoplasmic-facing. A helical membrane pass occupies residues 15-35 (LSAILPVVIVGLVGLFAVTVI). The Periplasmic segment spans residues 36 to 201 (RDYGRASEAD…ATQSGEKRNT (166 aa)). A helical transmembrane segment spans residues 202–222 (LIILFALATVLLASVLSFFWY). Residues 223-465 (RRYLRSRQLL…VNITRKDPQG (243 aa)) are Cytoplasmic-facing. One can recognise a Histidine kinase domain in the interval 251-458 (GVAHEIRNPL…TFTLWLPVNI (208 aa)). His-254 is modified (phosphohistidine; by autocatalysis).

In terms of processing, autophosphorylated.

The protein localises to the cell inner membrane. It carries out the reaction ATP + protein L-histidine = ADP + protein N-phospho-L-histidine.. Its activity is regulated as follows. Activity of the ZraS/ZraR two-component system is repressed by the zinc-bound form of ZraP, which probably interacts with the periplasmic region of ZraS. In terms of biological role, part of the Zra signaling pathway, an envelope stress response (ESR) system composed of the periplasmic accessory protein ZraP, the histidine kinase ZraS and the transcriptional regulator ZraR. The ZraPSR system contributes to antibiotic resistance and is important for membrane integrity in the presence of membrane-targeting biocides. ZraS is a member of the two-component regulatory system ZraS/ZraR. Functions as a membrane-associated sensor kinase that phosphorylates ZraR in response to high concentrations of Zn(2+) or Pb(2+) in the medium. Binds one zinc molecule with high affinity via its periplasmic domain, inducing a conformational change that is transmitted to the histidine kinase domain and leads to the activation of ZraR. The system has no direct role in zinc or copper resistance. The sequence is that of Sensor histidine kinase ZraS from Escherichia coli (strain K12).